Here is a 379-residue protein sequence, read N- to C-terminus: Homoserine O-succinyltransferase (379 aa).

Residues 51 to 360 form the AB hydrolase-1 domain; that stretch reads NAVLICHALS…DSPYGHDAFL (310 aa). The active-site Nucleophile is Ser157. Arg227 is a binding site for substrate. Active-site residues include Asp323 and His356. Asp357 provides a ligand contact to substrate.

Belongs to the AB hydrolase superfamily. MetX family. As to quaternary structure, homodimer.

The protein resides in the cytoplasm. It carries out the reaction L-homoserine + succinyl-CoA = O-succinyl-L-homoserine + CoA. It functions in the pathway amino-acid biosynthesis; L-methionine biosynthesis via de novo pathway; O-succinyl-L-homoserine from L-homoserine: step 1/1. Its function is as follows. Transfers a succinyl group from succinyl-CoA to L-homoserine, forming succinyl-L-homoserine. This is Homoserine O-succinyltransferase from Pseudomonas putida (strain W619).